A 2225-amino-acid chain; its full sequence is Nonribisomal peptide synthetase notE' (2225 aa).

The segment at Thr24–Ser59 is disordered. Residues Ser28–Pro49 are compositionally biased toward low complexity. Positions Gln83–Arg482 are adenylation 1. One can recognise a Carrier 1 domain in the interval Ser614–Thr690. O-(pantetheine 4'-phosphoryl)serine is present on Ser651. A condensation 1 region spans residues Glu730–Leu1142. The interval Ala1164–Arg1563 is adenylation 2. The 77-residue stretch at Pro1699 to Gln1775 folds into the Carrier 2 domain. Residue Ser1736 is modified to O-(pantetheine 4'-phosphoryl)serine. The condensation 2 stretch occupies residues Phe1827–Met2138.

This sequence belongs to the NRP synthetase family.

It catalyses the reaction L-proline + L-tryptophan + 2 ATP = brevianamide F + 2 AMP + 2 diphosphate + 2 H(+). Its pathway is alkaloid biosynthesis. Its function is as follows. Nonribisomal peptide synthetase; part of the gene cluster that mediates the biosynthesis of notoamide, a fungal indole alkaloid that belongs to a family of natural products containing a characteristic bicyclo[2.2.2]diazaoctane core. The first step of notoamide biosynthesis involves coupling of L-proline and L-tryptophan by the bimodular NRPS notE', to produce cyclo-L-tryptophan-L-proline called brevianamide F. The reverse prenyltransferase notF' then acts as a deoxybrevianamide E synthase and converts brevianamide F to deoxybrevianamide E via reverse prenylation at C-2 of the indole ring leading to the bicyclo[2.2.2]diazaoctane core. Deoxybrevianamide E is further hydroxylated at C-6 of the indole ring, likely catalyzed by the cytochrome P450 monooxygenase notG', to yield 6-hydroxy-deoxybrevianamide E. 6-hydroxy-deoxybrevianamide E is a specific substrate of the prenyltransferase notC' for normal prenylation at C-7 to produce 6-hydroxy-7-prenyl-deoxybrevianamide, also called notoamide S. As the proposed pivotal branching point in notoamide biosynthesis, notoamide S can be diverted to notoamide E through an oxidative pyran ring closure putatively catalyzed by either notH' cytochrome P450 monooxygenase or the notD' FAD-linked oxidoreductase. This step would be followed by an indole 2,3-epoxidation-initiated pinacol-like rearrangement catalyzed by the notB' FAD-dependent monooxygenase leading to the formation of notoamide C and notoamide D. On the other hand notoamide S is converted to notoamide T by notH' (or notD'), a bifunctional oxidase that also functions as the intramolecular Diels-Alderase responsible for generation of (-)-notoamide T. To generate antipodal (+)-notoaminide T, notH (or notD) in Aspergillus strain MF297-2 is expected to catalyze a Diels-Alder reaction leading to the opposite stereochemistry. The remaining oxidoreductase notD' (or notH') likely catalyzes the oxidative pyran ring formation to yield (-)-stephacidin A. The FAD-dependent monooxygenase notI' is highly similar to notB' and is predicted to catalyze a similar conversion from (-)-stephacidin A to (+)-notoamide B via the 2,3-epoxidation of (-)-stephacidin A followed by a pinacol-type rearrangement. Finally, it remains unclear which enzyme could be responsible for the final hydroxylation steps leading to notoamide A and sclerotiamide. The protein is Nonribisomal peptide synthetase notE' of Aspergillus versicolor.